The sequence spans 353 residues: N-acetyl-gamma-glutamyl-phosphate reductase (353 aa).

C155 is an active-site residue.

Belongs to the NAGSA dehydrogenase family. Type 1 subfamily.

The protein localises to the cytoplasm. The enzyme catalyses N-acetyl-L-glutamate 5-semialdehyde + phosphate + NADP(+) = N-acetyl-L-glutamyl 5-phosphate + NADPH + H(+). The protein operates within amino-acid biosynthesis; L-arginine biosynthesis; N(2)-acetyl-L-ornithine from L-glutamate: step 3/4. In terms of biological role, catalyzes the NADPH-dependent reduction of N-acetyl-5-glutamyl phosphate to yield N-acetyl-L-glutamate 5-semialdehyde. The chain is N-acetyl-gamma-glutamyl-phosphate reductase from Microcystis aeruginosa (strain NIES-843 / IAM M-2473).